Reading from the N-terminus, the 135-residue chain is Fatty acid-binding protein 5 (135 aa).

At Ala-2 the chain carries N-acetylalanine. Ser-3 is modified (phosphoserine). The short motif at 24–34 is the Nuclear localization signal element; it reads KELGVGLALRK. The 1-eicosanoylglycerol site is built by Cys-43, Thr-56, and Arg-109. The cysteines at positions 120 and 127 are disulfide-linked. Residue 129-131 coordinates 1-eicosanoylglycerol; the sequence is RVY. Position 129–131 (129–131) interacts with (9Z,12Z)-octadecadienoate; the sequence is RVY. Hexadecanoate is bound at residue Tyr-131. Residue Tyr-131 coordinates N-eicosanoyl ethanolamine. Tyr-131 is subject to Phosphotyrosine.

It belongs to the calycin superfamily. Fatty-acid binding protein (FABP) family. In terms of assembly, monomer. Widely expressed.

The protein localises to the cytoplasm. It localises to the nucleus. Its subcellular location is the synapse. It is found in the postsynaptic density. The protein resides in the secreted. The catalysed reaction is hexadecanoate(out) = hexadecanoate(in). It catalyses the reaction (9Z,12Z)-octadecadienoate(out) = (9Z,12Z)-octadecadienoate(in). It carries out the reaction (9Z)-octadecenoate(out) = (9Z)-octadecenoate(in). In terms of biological role, intracellular carrier for long-chain fatty acids and related active lipids, such as endocannabinoids, that regulate the metabolism and actions of the ligands they bind. In addition to the cytosolic transport, selectively delivers specific fatty acids from the cytosol to the nucleus, wherein they activate nuclear receptors. Delivers retinoic acid to the nuclear receptor peroxisome proliferator-activated receptor delta; which promotes proliferation and survival. May also serve as a synaptic carrier of endocannabinoid at central synapses and thus controls retrograde endocannabinoid signaling. Modulates inflammation by regulating PTGES induction via NF-kappa-B activation, and prostaglandin E2 (PGE2) biosynthesis during inflammation. May be involved in keratinocyte differentiation. This Mus musculus (Mouse) protein is Fatty acid-binding protein 5.